The primary structure comprises 120 residues: Large ribosomal subunit protein bL17 (120 aa).

It belongs to the bacterial ribosomal protein bL17 family. In terms of assembly, part of the 50S ribosomal subunit. Contacts protein L32.

This chain is Large ribosomal subunit protein bL17, found in Geobacillus thermodenitrificans (strain NG80-2).